The following is a 184-amino-acid chain: Large ribosomal subunit protein eL14 (184 aa).

The interval 149–184 is disordered; sequence KNAKKVDSTPAAKKRIEKARAARKAKPTAAKEKSKK. Residues 160 to 174 show a composition bias toward basic residues; the sequence is AKKRIEKARAARKAK.

Belongs to the eukaryotic ribosomal protein eL14 family.

This is Large ribosomal subunit protein eL14 from Trypanosoma congolense.